The sequence spans 95 residues: Large ribosomal subunit protein eL37x (95 aa).

Zn(2+) is bound by residues cysteine 19, cysteine 22, cysteine 34, and cysteine 37. The C4-type zinc finger occupies 19–37; the sequence is CVRCGRRSFHIQKSRCSAC. The interval 73–95 is disordered; that stretch reads RFKTGFREGTEAKPRSKASASSA. Over residues 77 to 86 the composition is skewed to basic and acidic residues; the sequence is GFREGTEAKP.

This sequence belongs to the eukaryotic ribosomal protein eL37 family. The cofactor is Zn(2+).

Functionally, binds to the 23S rRNA. This Arabidopsis thaliana (Mouse-ear cress) protein is Large ribosomal subunit protein eL37x (RPL37C).